A 184-amino-acid chain; its full sequence is Ribosome-recycling factor (184 aa).

The tract at residues 134-167 is disordered; that stretch reads MNDQLKKDEKNGDITEDELRSGTEDVQKATDNSI.

This sequence belongs to the RRF family.

The protein localises to the cytoplasm. Its function is as follows. Responsible for the release of ribosomes from messenger RNA at the termination of protein biosynthesis. May increase the efficiency of translation by recycling ribosomes from one round of translation to another. This is Ribosome-recycling factor from Staphylococcus aureus (strain Mu3 / ATCC 700698).